A 309-amino-acid polypeptide reads, in one-letter code: Isoflavone reductase homolog IRL (309 aa).

NADP(+) contacts are provided by residues 12-18, Arg-37, and Lys-46; that span reads GGTGYLG. The active-site Proton acceptor is the Lys-134. Arg-138 contributes to the NADP(+) binding site.

Belongs to the NmrA-type oxidoreductase family. Isoflavone reductase subfamily. In terms of assembly, monomer.

It is found in the cytoplasm. It functions in the pathway alkaloid biosynthesis. Its function is as follows. Reductase that may be involved in a late step of alkaloid biosynthesis. The protein is Isoflavone reductase homolog IRL of Zea mays (Maize).